The sequence spans 692 residues: Glycine--tRNA ligase beta subunit (692 aa).

It belongs to the class-II aminoacyl-tRNA synthetase family. In terms of assembly, tetramer of two alpha and two beta subunits.

It is found in the cytoplasm. It carries out the reaction tRNA(Gly) + glycine + ATP = glycyl-tRNA(Gly) + AMP + diphosphate. This chain is Glycine--tRNA ligase beta subunit, found in Hahella chejuensis (strain KCTC 2396).